A 1021-amino-acid polypeptide reads, in one-letter code: Nonribosomal peptide synthetase asaC (1021 aa).

Residues 17 to 418 form an adenylation (A) domain region; sequence RHHVRTSPNA…ARADNMVKIR (402 aa). One can recognise a Carrier domain in the interval 528–603; it reads KDAGDSVTWL…GLASVIDAGH (76 aa). An O-(pantetheine 4'-phosphoryl)serine modification is found at S563. A short-chain dehydrogenase/reductase (R) domain region spans residues 646–888; that stretch reads LTGATGFLGT…MIPVDFITTA (243 aa).

Belongs to the NRP synthetase family.

It functions in the pathway secondary metabolite biosynthesis. In terms of biological role, nonribosomal peptide synthetase; part of the gene cluster that mediates the biosynthesis of aspergillic acid, a hydroxamic acid-containing pyrazinone with aliphatic side chains that originates from leucine (Leu) and isoleucine (Ile). Aspergillic acid has antibiotic properties and was shown to be lethal to mice. The first step in the pathway is the production of deoxyaspergillic acid via a condensation between the Ile amine and the Leu carboxylic acid, followed by a reductive release from the protein forming the dipeptide aldehyde NH(2)-Leu-Ile-CHO, which could undergo an intermolecular cyclization resulting in a dihydropyrazinone. As the NRPS asaC lacks a condensation domain, it is improbable that it is responsible for condensation of Leu and Ile. One possibility is that asaC acts on a previously condensed dipeptide and functions as a Leu-Ile reductase to yield deoxyaspergillic acid. After asaC forms deoxyaspergillic acid, the cytochrome P450 asaD oxidizes the pyrazinone to the hydroxamic acid-containing bioactive metabolite aspergillic acid. The hydroxylase/desaturase asaB can then convert aspergillic acid to hydroxyaspergillic acid. Both aspergillic acid and hydroxyaspergillic acid can form complexes with iron producing ferriaspergillin analogs. The chain is Nonribosomal peptide synthetase asaC from Aspergillus flavus (strain ATCC 200026 / FGSC A1120 / IAM 13836 / NRRL 3357 / JCM 12722 / SRRC 167).